Here is a 510-residue protein sequence, read N- to C-terminus: MYSLEIIPGKLSLKQLREVSRHPTKLSLDPNALPDMLISADVVAQVIEEGKTVYGINTGFGLLANTRIAEKDLETLQRSIVLSHAAGIGEFMDDATVRLMMVLKINSLARGYSGIRPLVIDALIQLVNSEVYPCIPKKGSVGASGDLAPLAHMSTVLLGEGEARYRGEVITGKTALEIAGLTPITLAPKEGLALLNGTQASTAFALEGLFAAEDLYASATVCGAMSVEAALGSRKPFDPRIHRVRGHRSQMDAALAYRHLLAQSSDIGLSHQCCERVQDPYSLRCQPQVMGACLQQIRNSADILEIEANSVSDNPLVFADDGDIISGGNFHAEPVAMAADNLALAISEIGSLSERRMALLIDSGLSKLPPFLVDNGGVNSGFMIAQVTAAALASENKTLAHPASIDSLPTSANQEDHVSMATFAGRRLGDMAENTRGILAVELLAAAQGLDFRAPNKSSNRIEKAKELLRERVDFYDKDRYFAPDIAKANSLLKEAVYNHLMPDTLLPSI.

A cross-link (5-imidazolinone (Ala-Gly)) is located at residues 143 to 145; that stretch reads ASG. Serine 144 carries the 2,3-didehydroalanine (Ser) modification.

It belongs to the PAL/histidase family. Post-translationally, contains an active site 4-methylidene-imidazol-5-one (MIO), which is formed autocatalytically by cyclization and dehydration of residues Ala-Ser-Gly.

It localises to the cytoplasm. It catalyses the reaction L-histidine = trans-urocanate + NH4(+). It functions in the pathway amino-acid degradation; L-histidine degradation into L-glutamate; N-formimidoyl-L-glutamate from L-histidine: step 1/3. The sequence is that of Histidine ammonia-lyase from Aliivibrio fischeri (strain ATCC 700601 / ES114) (Vibrio fischeri).